Consider the following 748-residue polypeptide: Catalase-peroxidase (748 aa).

A cross-link (tryptophyl-tyrosyl-methioninium (Trp-Tyr) (with M-264)) is located at residues 92 to 238 (WHSAGTYRIG…LAAVQMGLIY (147 aa)). Catalysis depends on H93, which acts as the Proton acceptor. Residues 238-264 (YVNPEGPDGNPDPIASARDIRDTFARM) constitute a cross-link (tryptophyl-tyrosyl-methioninium (Tyr-Met) (with W-92)). A heme b-binding site is contributed by H279.

It belongs to the peroxidase family. Peroxidase/catalase subfamily. Homodimer or homotetramer. The cofactor is heme b. Formation of the three residue Trp-Tyr-Met cross-link is important for the catalase, but not the peroxidase activity of the enzyme.

The enzyme catalyses H2O2 + AH2 = A + 2 H2O. It catalyses the reaction 2 H2O2 = O2 + 2 H2O. In terms of biological role, bifunctional enzyme with both catalase and broad-spectrum peroxidase activity. This Xanthomonas euvesicatoria pv. vesicatoria (strain 85-10) (Xanthomonas campestris pv. vesicatoria) protein is Catalase-peroxidase.